The sequence spans 220 residues: Urease accessory protein UreF (220 aa).

Belongs to the UreF family. In terms of assembly, ureD, UreF and UreG form a complex that acts as a GTP-hydrolysis-dependent molecular chaperone, activating the urease apoprotein by helping to assemble the nickel containing metallocenter of UreC. The UreE protein probably delivers the nickel.

The protein localises to the cytoplasm. Functionally, required for maturation of urease via the functional incorporation of the urease nickel metallocenter. This is Urease accessory protein UreF from Jannaschia sp. (strain CCS1).